The primary structure comprises 260 residues: Carbonic anhydrase 3 (260 aa).

Position 2 is an N-acetylalanine (Ala-2). The 257-residue stretch at 3–259 (KEWGYADHNG…LKGRVVRASF (257 aa)) folds into the Alpha-carbonic anhydrase domain. Phosphoserine occurs at positions 29, 43, 50, and 55. The segment at 64-67 (RTCR) is involved in proton transfer. Thr-73 carries the phosphothreonine modification. The Zn(2+) site is built by His-94, His-96, and His-119. Tyr-127 is subject to Phosphotyrosine. Residues Thr-129 and Thr-176 each carry the phosphothreonine modification. Cys-182 and Cys-187 each carry S-glutathionyl cysteine. 198–199 (TT) is a binding site for substrate. Thr-216 carries the post-translational modification Phosphothreonine. Residue Ser-219 is modified to Phosphoserine.

This sequence belongs to the alpha-carbonic anhydrase family. Zn(2+) is required as a cofactor. Post-translationally, S-thiolated both by thiol-disulfide exchange with glutathione disulfide and by oxyradical-initiated S-thiolation with reduced glutathione. S-glutathionylated in hepatocytes under oxidative stress.

Its subcellular location is the cytoplasm. The enzyme catalyses hydrogencarbonate + H(+) = CO2 + H2O. With respect to regulation, inhibited by acetazolamide. In terms of biological role, reversible hydration of carbon dioxide. The sequence is that of Carbonic anhydrase 3 (CA3) from Equus caballus (Horse).